A 385-amino-acid chain; its full sequence is UDP-N-acetylglucosamine--N-acetylmuramyl-(pentapeptide) pyrophosphoryl-undecaprenol N-acetylglucosamine transferase (385 aa).

UDP-N-acetyl-alpha-D-glucosamine contacts are provided by residues 11 to 13 (TGG), asparagine 117, arginine 160, serine 215, and glutamine 317.

This sequence belongs to the glycosyltransferase 28 family. MurG subfamily.

The protein resides in the cell inner membrane. The catalysed reaction is di-trans,octa-cis-undecaprenyl diphospho-N-acetyl-alpha-D-muramoyl-L-alanyl-D-glutamyl-meso-2,6-diaminopimeloyl-D-alanyl-D-alanine + UDP-N-acetyl-alpha-D-glucosamine = di-trans,octa-cis-undecaprenyl diphospho-[N-acetyl-alpha-D-glucosaminyl-(1-&gt;4)]-N-acetyl-alpha-D-muramoyl-L-alanyl-D-glutamyl-meso-2,6-diaminopimeloyl-D-alanyl-D-alanine + UDP + H(+). The protein operates within cell wall biogenesis; peptidoglycan biosynthesis. In terms of biological role, cell wall formation. Catalyzes the transfer of a GlcNAc subunit on undecaprenyl-pyrophosphoryl-MurNAc-pentapeptide (lipid intermediate I) to form undecaprenyl-pyrophosphoryl-MurNAc-(pentapeptide)GlcNAc (lipid intermediate II). The protein is UDP-N-acetylglucosamine--N-acetylmuramyl-(pentapeptide) pyrophosphoryl-undecaprenol N-acetylglucosamine transferase of Rickettsia prowazekii (strain Madrid E).